Consider the following 149-residue polypeptide: Nucleoside diphosphate kinase (149 aa).

The ATP site is built by Lys-9, Phe-57, Arg-85, Thr-91, Arg-102, and Asn-112. The active-site Pros-phosphohistidine intermediate is His-115.

It belongs to the NDK family. Mg(2+) is required as a cofactor.

It localises to the cytoplasm. It catalyses the reaction a 2'-deoxyribonucleoside 5'-diphosphate + ATP = a 2'-deoxyribonucleoside 5'-triphosphate + ADP. It carries out the reaction a ribonucleoside 5'-diphosphate + ATP = a ribonucleoside 5'-triphosphate + ADP. In terms of biological role, major role in the synthesis of nucleoside triphosphates other than ATP. The ATP gamma phosphate is transferred to the NDP beta phosphate via a ping-pong mechanism, using a phosphorylated active-site intermediate. The sequence is that of Nucleoside diphosphate kinase from Methanoculleus marisnigri (strain ATCC 35101 / DSM 1498 / JR1).